We begin with the raw amino-acid sequence, 326 residues long: Vitamin B12 import system permease protein BtuC (326 aa).

9 helical membrane-spanning segments follow: residues 15–35, 61–81, 88–108, 112–132, 146–166, 184–204, 240–260, 274–294, and 302–322; these read WLLC…CAGE, LAVL…QALF, PGLL…VLLG, LPNW…TLIL, LLAG…AIYF, GGVD…LLWI, GWMV…GLVI, VLLP…DIVA, and ELPI…WLLL.

It belongs to the binding-protein-dependent transport system permease family. FecCD subfamily. In terms of assembly, the complex is composed of two ATP-binding proteins (BtuD), two transmembrane proteins (BtuC) and a solute-binding protein (BtuF).

It is found in the cell inner membrane. Functionally, part of the ABC transporter complex BtuCDF involved in vitamin B12 import. Involved in the translocation of the substrate across the membrane. This Shigella boydii serotype 18 (strain CDC 3083-94 / BS512) protein is Vitamin B12 import system permease protein BtuC.